Consider the following 500-residue polypeptide: Probable cytosol aminopeptidase (500 aa).

Mn(2+) contacts are provided by Lys-265 and Asp-270. The active site involves Lys-277. The Mn(2+) site is built by Asp-288, Asp-347, and Glu-349. Residue Arg-351 is part of the active site.

Belongs to the peptidase M17 family. It depends on Mn(2+) as a cofactor.

The protein resides in the cytoplasm. It catalyses the reaction Release of an N-terminal amino acid, Xaa-|-Yaa-, in which Xaa is preferably Leu, but may be other amino acids including Pro although not Arg or Lys, and Yaa may be Pro. Amino acid amides and methyl esters are also readily hydrolyzed, but rates on arylamides are exceedingly low.. It carries out the reaction Release of an N-terminal amino acid, preferentially leucine, but not glutamic or aspartic acids.. Its function is as follows. Presumably involved in the processing and regular turnover of intracellular proteins. Catalyzes the removal of unsubstituted N-terminal amino acids from various peptides. The sequence is that of Probable cytosol aminopeptidase from Rickettsia rickettsii (strain Iowa).